A 250-amino-acid chain; its full sequence is tRNA pseudouridine synthase A (250 aa).

The Nucleophile role is filled by D53. Substrate is bound at residue Y111.

Belongs to the tRNA pseudouridine synthase TruA family. Homodimer.

It carries out the reaction uridine(38/39/40) in tRNA = pseudouridine(38/39/40) in tRNA. Its function is as follows. Formation of pseudouridine at positions 38, 39 and 40 in the anticodon stem and loop of transfer RNAs. This chain is tRNA pseudouridine synthase A, found in Streptococcus uberis (strain ATCC BAA-854 / 0140J).